Here is a 737-residue protein sequence, read N- to C-terminus: Pentatricopeptide repeat-containing protein At3g49740 (737 aa).

PPR repeat units follow at residues 20–55 (TLLN…TLRP), 56–90 (DQYS…GLLC), 91–121 (HSHV…IDEP), 122–152 (DVYS…MPER), 154–188 (DVAI…GVRH), 189–222 (DKFG…GFFI), 223–253 (ASSV…TDVA), 256–289 (DQVT…SLRP), 290–321 (TDLT…GYEK), 322–352 (YTLV…LEEK), 353–387 (DLVT…GVKP), 388–418 (DEFT…FGLS), 420–454 (KIEI…NLIS), 455–485 (WNAI…EVRI), 488–522 (DAYT…GQFK), 523–553 (ETLI…MSEK), 554–588 (DVVS…GKVI), 590–620 (DAAT…MVEF), and 626–656 (NVDH…SEKT). The tract at residues 663-737 (VWWALFSACA…KQRGCSWMRL (75 aa)) is type E motif; degenerate.

This sequence belongs to the PPR family. PCMP-E subfamily.

The sequence is that of Pentatricopeptide repeat-containing protein At3g49740 (PCMP-E84) from Arabidopsis thaliana (Mouse-ear cress).